A 61-amino-acid polypeptide reads, in one-letter code: Photosystem II reaction center protein K (61 aa).

Residues 1 to 24 constitute a propeptide that is removed on maturation; the sequence is MPNILSLTCICFNSVLCPTSFFFA. Residues 32-52 traverse the membrane as a helical segment; that stretch reads IFNPIVDVMPVIPVLFFLLAF.

It belongs to the PsbK family. In terms of assembly, PSII is composed of 1 copy each of membrane proteins PsbA, PsbB, PsbC, PsbD, PsbE, PsbF, PsbH, PsbI, PsbJ, PsbK, PsbL, PsbM, PsbT, PsbX, PsbY, PsbZ, Psb30/Ycf12, at least 3 peripheral proteins of the oxygen-evolving complex and a large number of cofactors. It forms dimeric complexes.

The protein resides in the plastid. It localises to the chloroplast thylakoid membrane. One of the components of the core complex of photosystem II (PSII). PSII is a light-driven water:plastoquinone oxidoreductase that uses light energy to abstract electrons from H(2)O, generating O(2) and a proton gradient subsequently used for ATP formation. It consists of a core antenna complex that captures photons, and an electron transfer chain that converts photonic excitation into a charge separation. This Sorghum bicolor (Sorghum) protein is Photosystem II reaction center protein K.